Reading from the N-terminus, the 444-residue chain is Na(+)-translocating NADH-quinone reductase subunit A (444 aa).

The protein belongs to the NqrA family. As to quaternary structure, composed of six subunits; NqrA, NqrB, NqrC, NqrD, NqrE and NqrF.

It carries out the reaction a ubiquinone + n Na(+)(in) + NADH + H(+) = a ubiquinol + n Na(+)(out) + NAD(+). Its function is as follows. NQR complex catalyzes the reduction of ubiquinone-1 to ubiquinol by two successive reactions, coupled with the transport of Na(+) ions from the cytoplasm to the periplasm. NqrA to NqrE are probably involved in the second step, the conversion of ubisemiquinone to ubiquinol. This Shewanella denitrificans (strain OS217 / ATCC BAA-1090 / DSM 15013) protein is Na(+)-translocating NADH-quinone reductase subunit A.